Reading from the N-terminus, the 553-residue chain is Glucose-6-phosphate isomerase (553 aa).

Catalysis depends on E357, which acts as the Proton donor. Catalysis depends on residues H388 and K514. A disordered region spans residues I524–G553. The span at L541 to G553 shows a compositional bias: basic and acidic residues.

Belongs to the GPI family.

It localises to the cytoplasm. The catalysed reaction is alpha-D-glucose 6-phosphate = beta-D-fructose 6-phosphate. The protein operates within carbohydrate biosynthesis; gluconeogenesis. It functions in the pathway carbohydrate degradation; glycolysis; D-glyceraldehyde 3-phosphate and glycerone phosphate from D-glucose: step 2/4. Functionally, catalyzes the reversible isomerization of glucose-6-phosphate to fructose-6-phosphate. This chain is Glucose-6-phosphate isomerase, found in Mycobacterium bovis (strain BCG / Tokyo 172 / ATCC 35737 / TMC 1019).